Reading from the N-terminus, the 250-residue chain is tRNA (guanine-N(1)-)-methyltransferase (250 aa).

S-adenosyl-L-methionine-binding positions include G113 and 133 to 138 (VGDYVL).

The protein belongs to the RNA methyltransferase TrmD family. As to quaternary structure, homodimer.

The protein localises to the cytoplasm. The catalysed reaction is guanosine(37) in tRNA + S-adenosyl-L-methionine = N(1)-methylguanosine(37) in tRNA + S-adenosyl-L-homocysteine + H(+). Specifically methylates guanosine-37 in various tRNAs. In Proteus mirabilis (strain HI4320), this protein is tRNA (guanine-N(1)-)-methyltransferase.